Reading from the N-terminus, the 422-residue chain is Replication factor C large subunit (422 aa).

63 to 70 (GPPGVGKT) serves as a coordination point for ATP.

It belongs to the activator 1 small subunits family. RfcL subfamily. Heteromultimer composed of small subunits (RfcS) and large subunits (RfcL).

Functionally, part of the RFC clamp loader complex which loads the PCNA sliding clamp onto DNA. The protein is Replication factor C large subunit of Pyrobaculum aerophilum (strain ATCC 51768 / DSM 7523 / JCM 9630 / CIP 104966 / NBRC 100827 / IM2).